The chain runs to 621 residues: UvrABC system protein C (621 aa).

Residues 21–100 (AEPGVYLMRD…IKTYQPPYNV (80 aa)) enclose the GIY-YIG domain. A UVR domain is found at 210–245 (DELIRELKEKMAQAAQQENYEAAARYRDQIRGLEQL).

It belongs to the UvrC family. In terms of assembly, interacts with UvrB in an incision complex.

The protein resides in the cytoplasm. In terms of biological role, the UvrABC repair system catalyzes the recognition and processing of DNA lesions. UvrC both incises the 5' and 3' sides of the lesion. The N-terminal half is responsible for the 3' incision and the C-terminal half is responsible for the 5' incision. The sequence is that of UvrABC system protein C from Synechococcus sp. (strain JA-3-3Ab) (Cyanobacteria bacterium Yellowstone A-Prime).